We begin with the raw amino-acid sequence, 232 residues long: Phosphatidylserine decarboxylase proenzyme (232 aa).

Catalysis depends on Ser190, which acts as the Schiff-base intermediate with substrate; via pyruvic acid. A Pyruvic acid (Ser); by autocatalysis modification is found at Ser190.

This sequence belongs to the phosphatidylserine decarboxylase family. PSD-A subfamily. Heterodimer of a large membrane-associated beta subunit and a small pyruvoyl-containing alpha subunit. Pyruvate is required as a cofactor. In terms of processing, is synthesized initially as an inactive proenzyme. Formation of the active enzyme involves a self-maturation process in which the active site pyruvoyl group is generated from an internal serine residue via an autocatalytic post-translational modification. Two non-identical subunits are generated from the proenzyme in this reaction, and the pyruvate is formed at the N-terminus of the alpha chain, which is derived from the carboxyl end of the proenzyme. The post-translation cleavage follows an unusual pathway, termed non-hydrolytic serinolysis, in which the side chain hydroxyl group of the serine supplies its oxygen atom to form the C-terminus of the beta chain, while the remainder of the serine residue undergoes an oxidative deamination to produce ammonia and the pyruvoyl prosthetic group on the alpha chain.

The protein localises to the cell membrane. The enzyme catalyses a 1,2-diacyl-sn-glycero-3-phospho-L-serine + H(+) = a 1,2-diacyl-sn-glycero-3-phosphoethanolamine + CO2. Its pathway is phospholipid metabolism; phosphatidylethanolamine biosynthesis; phosphatidylethanolamine from CDP-diacylglycerol: step 2/2. Catalyzes the formation of phosphatidylethanolamine (PtdEtn) from phosphatidylserine (PtdSer). The chain is Phosphatidylserine decarboxylase proenzyme from Bradyrhizobium sp. (strain BTAi1 / ATCC BAA-1182).